The chain runs to 210 residues: Calcium-activated potassium channel subunit beta-4 (210 aa).

Residues 1–19 (MAKLRVAYEYTEAEDKSIR) lie on the Cytoplasmic side of the membrane. A helical membrane pass occupies residues 20–40 (LGLFLIISGVVSLFIFGFCWL). Topologically, residues 41–167 (SPALQDLQAT…DVLLHRTHDE (127 aa)) are extracellular. N-linked (GlcNAc...) asparagine glycans are attached at residues N53 and N90. Residues 168 to 188 (IVLLHCFLWPLVTFVVGVLIV) form a helical membrane-spanning segment. Residues 189–210 (VLTICAKSLAVKAEAMKKRKFS) lie on the Cytoplasmic side of the membrane.

It belongs to the KCNMB (TC 8.A.14.1) family. KCNMB4 subfamily. In terms of assembly, interacts with KCNMA1 tetramer. There are probably 4 molecules of KCMNB4 per KCNMA1 tetramer. Interacts with FMR1 (via N-terminus). Phosphorylated. Phosphorylation modulates its effect on KCNMA1 activation kinetics. Post-translationally, N-glycosylated. A highly glycosylated form is promoted by KCNMA1. Glycosylation, which is not required for the interaction with KCNMA1 and subcellular location, increases protection against charybdotoxin. In terms of tissue distribution, predominantly expressed in brain. In brain, it is expressed in the cerebellum, cerebral cortex, medulla, spinal cord, occipital pole, frontal lobe, temporal lobe, putamen, amygdala, caudate nucleus, corpus callosum, hippocampus, substantia nigra and thalamus. Weakly or not expressed in other tissues.

The protein resides in the membrane. Its function is as follows. Regulatory subunit of the calcium activated potassium KCNMA1 (maxiK) channel. Modulates the calcium sensitivity and gating kinetics of KCNMA1, thereby contributing to KCNMA1 channel diversity. Decreases the gating kinetics and calcium sensitivity of the KCNMA1 channel, but with fast deactivation kinetics. May decrease KCNMA1 channel openings at low calcium concentrations but increases channel openings at high calcium concentrations. Makes KCNMA1 channel resistant to 100 nM charybdotoxin (CTX) toxin concentrations. The sequence is that of Calcium-activated potassium channel subunit beta-4 (KCNMB4) from Homo sapiens (Human).